Consider the following 448-residue polypeptide: Protein kinase C and casein kinase substrate in neurons protein 2 (448 aa).

The F-BAR domain occupies 11 to 282 (VEVSSDSFWE…NIKTADAVED (272 aa)). The stretch at 25 to 274 (KRTVKRIDDG…NIYRELEQNI (250 aa)) forms a coiled coil. The disordered stretch occupies residues 315-386 (SRREKKKASD…DTNPFDEDTS (72 aa)). Over residues 329–358 (TGINQTGDQVSQPNKHSSVSSYEKNQSYPT) the composition is skewed to polar residues. The NPF1 motif lies at 367 to 369 (NPF). Residues 379–381 (NPF) carry the NPF2 motif. Residues 388–448 (VMEVRVRALY…YPANYVEPIQ (61 aa)) enclose the SH3 domain.

The protein belongs to the PACSIN family. In terms of processing, phosphorylated on serine residues. As to expression, detected in intestine, cardiac muscle, lung and brain (at protein level). Expressed in all tissues tested, including, gizzard, liver, cardiac muscle, skeletal muscle and skin.

The protein resides in the cytoplasm. It localises to the cytoskeleton. It is found in the cytoplasmic vesicle membrane. The protein localises to the cell projection. Its subcellular location is the ruffle membrane. The protein resides in the early endosome. It localises to the recycling endosome membrane. It is found in the cell membrane. The protein localises to the membrane. Its subcellular location is the caveola. The protein resides in the cell junction. It localises to the focal adhesion. Functionally, regulates the morphogenesis and endocytosis of caveolae. Lipid-binding protein that is able to promote the tubulation of the phosphatidic acid-containing membranes it preferentially binds. Plays a role in intracellular vesicle-mediated transport. Involved in the endocytosis of cell-surface receptors like the EGF receptor, contributing to its internalization in the absence of EGF stimulus. Essential for endothelial organization in sprouting angiogenesis, modulates CDH5-based junctions. Facilitates endothelial front-rear polarity during migration by recruiting EHD4 and MICALL1 to asymmetric adherens junctions between leader and follower cells. The sequence is that of Protein kinase C and casein kinase substrate in neurons protein 2 (PACSIN2) from Gallus gallus (Chicken).